We begin with the raw amino-acid sequence, 124 residues long: Large ribosomal subunit protein bL19 (124 aa).

Belongs to the bacterial ribosomal protein bL19 family.

In terms of biological role, this protein is located at the 30S-50S ribosomal subunit interface and may play a role in the structure and function of the aminoacyl-tRNA binding site. This is Large ribosomal subunit protein bL19 from Zymomonas mobilis subsp. mobilis (strain ATCC 31821 / ZM4 / CP4).